Here is a 367-residue protein sequence, read N- to C-terminus: Anthranilate phosphoribosyltransferase (367 aa).

5-phospho-alpha-D-ribose 1-diphosphate is bound by residues Gly105, 108–109 (GD), Thr113, 115–118 (NIST), 133–141 (KHGNRAASS), and Gly145. Gly105 serves as a coordination point for anthranilate. Ser117 provides a ligand contact to Mg(2+). Anthranilate is bound at residue Asn136. Arg191 is an anthranilate binding site. Residues Asp249 and Glu250 each contribute to the Mg(2+) site.

The protein belongs to the anthranilate phosphoribosyltransferase family. In terms of assembly, homodimer. Mg(2+) serves as cofactor.

The enzyme catalyses N-(5-phospho-beta-D-ribosyl)anthranilate + diphosphate = 5-phospho-alpha-D-ribose 1-diphosphate + anthranilate. It participates in amino-acid biosynthesis; L-tryptophan biosynthesis; L-tryptophan from chorismate: step 2/5. Its function is as follows. Catalyzes the transfer of the phosphoribosyl group of 5-phosphorylribose-1-pyrophosphate (PRPP) to anthranilate to yield N-(5'-phosphoribosyl)-anthranilate (PRA). In Corynebacterium jeikeium (strain K411), this protein is Anthranilate phosphoribosyltransferase.